The sequence spans 391 residues: S-adenosylmethionine synthase (391 aa).

His-14 is an ATP binding site. Residue Asp-16 coordinates Mg(2+). Glu-42 serves as a coordination point for K(+). 2 residues coordinate L-methionine: Glu-55 and Gln-98. The segment at 98 to 108 (QSPDIAMGVDE) is flexible loop. ATP contacts are provided by residues 172-174 (DGK), 238-239 (RF), Asp-247, 253-254 (RK), Ala-270, and Lys-274. Asp-247 contributes to the L-methionine binding site. Lys-278 is a binding site for L-methionine.

This sequence belongs to the AdoMet synthase family. As to quaternary structure, homotetramer; dimer of dimers. The cofactor is Mg(2+). K(+) serves as cofactor.

The protein localises to the cytoplasm. It catalyses the reaction L-methionine + ATP + H2O = S-adenosyl-L-methionine + phosphate + diphosphate. Its pathway is amino-acid biosynthesis; S-adenosyl-L-methionine biosynthesis; S-adenosyl-L-methionine from L-methionine: step 1/1. Catalyzes the formation of S-adenosylmethionine (AdoMet) from methionine and ATP. The overall synthetic reaction is composed of two sequential steps, AdoMet formation and the subsequent tripolyphosphate hydrolysis which occurs prior to release of AdoMet from the enzyme. In Clostridium tetani (strain Massachusetts / E88), this protein is S-adenosylmethionine synthase.